Reading from the N-terminus, the 732-residue chain is Trehalose phosphorylase (732 aa).

The propeptide occupies Met-1–Ser-25.

Belongs to the glycosyltransferase group 1 family. Glycosyltransferase 4 subfamily. In terms of assembly, homodimer.

The catalysed reaction is alpha,alpha-trehalose + phosphate = alpha-D-glucose + alpha-D-glucose 1-phosphate. Activity abolished by 1 mM Cu(2+). 0.1 mM Cu(2+) reduces trehalose phosphorolysis to 76% and trehalose synthesis to 48% of maximum activity. 1 mM Zn(2+) abolishes trehalose synthesis, and reduces trehalose phosphorolysis to 40% of maximum activity. Unaffected by EDTA. Reversibly catalyzes the synthesis and degradation of trehalose from glucose and alpha-D-glucose 1-phosphate. The equilibrium lies in the direction of trehalose synthesis. This Grifola frondosa (Maitake) protein is Trehalose phosphorylase.